Reading from the N-terminus, the 231-residue chain is Response regulator Rre1 (231 aa).

The 118-residue stretch at 6–123 (SLLLVDDEPG…ELEAIVRNLL (118 aa)) folds into the Response regulatory domain. 4-aspartylphosphate is present on Asp56. The 66-residue stretch at 163–228 (PSPIKLDFTP…ELVRFALQHG (66 aa)) folds into the HTH luxR-type domain. The segment at residues 187 to 206 (NKEIAAQLKTSVRNVEKYVS) is a DNA-binding region (H-T-H motif).

As to quaternary structure, interacts with histidine kinase Hik2; may accept phosphate from Hik2.

Its function is as follows. Member of at least 2 two-component regulatory systems Hik2/Rre1 and Hik34/Rre1. Responds to hyperosmotic stress, regulates expression of at least 24 genes including dnaK2 and hspA with Hik34 and sigB (sll0306), sll0528, slr1119, slr0852 and ssr3188 with Hik2. Responds to salt stress, regulates expression of at least 24 genes including adhA, dnaK2 and hspA with Hik34. Binds the adhA promoter. Phosphorylated by Hik2 in vitro. Phosphorylated protein has 10-fold higher affinity for DNA than unphosphorylated protein. The chain is Response regulator Rre1 from Synechocystis sp. (strain ATCC 27184 / PCC 6803 / Kazusa).